Consider the following 419-residue polypeptide: UDP-N-acetylglucosamine 1-carboxyvinyltransferase (419 aa).

A phosphoenolpyruvate-binding site is contributed by 22 to 23; the sequence is KN. R92 contacts UDP-N-acetyl-alpha-D-glucosamine. The active-site Proton donor is the C116. 2-(S-cysteinyl)pyruvic acid O-phosphothioketal is present on C116. Residues 121 to 125, D306, and I328 contribute to the UDP-N-acetyl-alpha-D-glucosamine site; that span reads RPIDL.

Belongs to the EPSP synthase family. MurA subfamily.

It is found in the cytoplasm. It carries out the reaction phosphoenolpyruvate + UDP-N-acetyl-alpha-D-glucosamine = UDP-N-acetyl-3-O-(1-carboxyvinyl)-alpha-D-glucosamine + phosphate. It functions in the pathway cell wall biogenesis; peptidoglycan biosynthesis. In terms of biological role, cell wall formation. Adds enolpyruvyl to UDP-N-acetylglucosamine. Target for the antibiotic fosfomycin. Involved in heteroresistance to antibiotic fosfomycin. Heteroresistance is the ability of a clonal population to grow one or several subpopulations at a frequency of 10(-7) to 10(-3) in the presence of a higher antibiotic concentration than that predicted to be effective by measurement of the minimum inhibitory concentration (MIC). The protein is UDP-N-acetylglucosamine 1-carboxyvinyltransferase of Streptococcus pneumoniae serotype 2 (strain D39 / NCTC 7466).